The following is a 93-amino-acid chain: Precursor of CEP13 (93 aa).

The signal sequence occupies residues Met1–Ala27. Residues Arg28–Glu78 constitute a propeptide that is removed on maturation. The disordered stretch occupies residues Leu45–His93. A hydroxyproline mark is found at Pro87 and Pro89.

The protein belongs to the C-terminally encoded plant signaling peptide (CEP) family. Interacts with CEP receptors (e.g. CEPR1 and CEPR2). Post-translationally, the mature small signaling peptide is generated by proteolytic processing of the longer precursor.

It localises to the secreted. The protein localises to the extracellular space. Its subcellular location is the apoplast. Its function is as follows. Extracellular signaling peptide that may regulate primary root growth rate and systemic nitrogen (N)-demand signaling. The polypeptide is Precursor of CEP13 (Arabidopsis thaliana (Mouse-ear cress)).